The following is a 311-amino-acid chain: Lipoyl synthase (311 aa).

Residues Cys47, Cys52, Cys58, Cys73, Cys77, Cys80, and Ser287 each coordinate [4Fe-4S] cluster. Residues 59 to 276 (WTKKHATVMI…AQIARAKGFL (218 aa)) form the Radical SAM core domain.

Belongs to the radical SAM superfamily. Lipoyl synthase family. [4Fe-4S] cluster is required as a cofactor.

It localises to the cytoplasm. It carries out the reaction [[Fe-S] cluster scaffold protein carrying a second [4Fe-4S](2+) cluster] + N(6)-octanoyl-L-lysyl-[protein] + 2 oxidized [2Fe-2S]-[ferredoxin] + 2 S-adenosyl-L-methionine + 4 H(+) = [[Fe-S] cluster scaffold protein] + N(6)-[(R)-dihydrolipoyl]-L-lysyl-[protein] + 4 Fe(3+) + 2 hydrogen sulfide + 2 5'-deoxyadenosine + 2 L-methionine + 2 reduced [2Fe-2S]-[ferredoxin]. The protein operates within protein modification; protein lipoylation via endogenous pathway; protein N(6)-(lipoyl)lysine from octanoyl-[acyl-carrier-protein]: step 2/2. In terms of biological role, catalyzes the radical-mediated insertion of two sulfur atoms into the C-6 and C-8 positions of the octanoyl moiety bound to the lipoyl domains of lipoate-dependent enzymes, thereby converting the octanoylated domains into lipoylated derivatives. The chain is Lipoyl synthase from Sphingopyxis alaskensis (strain DSM 13593 / LMG 18877 / RB2256) (Sphingomonas alaskensis).